A 485-amino-acid chain; its full sequence is Aspartyl/glutamyl-tRNA(Asn/Gln) amidotransferase subunit B (485 aa).

It belongs to the GatB/GatE family. GatB subfamily. As to quaternary structure, heterotrimer of A, B and C subunits.

It carries out the reaction L-glutamyl-tRNA(Gln) + L-glutamine + ATP + H2O = L-glutaminyl-tRNA(Gln) + L-glutamate + ADP + phosphate + H(+). The catalysed reaction is L-aspartyl-tRNA(Asn) + L-glutamine + ATP + H2O = L-asparaginyl-tRNA(Asn) + L-glutamate + ADP + phosphate + 2 H(+). Functionally, allows the formation of correctly charged Asn-tRNA(Asn) or Gln-tRNA(Gln) through the transamidation of misacylated Asp-tRNA(Asn) or Glu-tRNA(Gln) in organisms which lack either or both of asparaginyl-tRNA or glutaminyl-tRNA synthetases. The reaction takes place in the presence of glutamine and ATP through an activated phospho-Asp-tRNA(Asn) or phospho-Glu-tRNA(Gln). The polypeptide is Aspartyl/glutamyl-tRNA(Asn/Gln) amidotransferase subunit B (Ruminiclostridium cellulolyticum (strain ATCC 35319 / DSM 5812 / JCM 6584 / H10) (Clostridium cellulolyticum)).